The following is a 123-amino-acid chain: UPF0102 protein APP7_1414 (123 aa).

Belongs to the UPF0102 family.

This is UPF0102 protein APP7_1414 from Actinobacillus pleuropneumoniae serotype 7 (strain AP76).